We begin with the raw amino-acid sequence, 277 residues long: Bifunctional protein FolD (277 aa).

Residues Gly164–Ser166, Ser189, and Thr230 each bind NADP(+).

This sequence belongs to the tetrahydrofolate dehydrogenase/cyclohydrolase family. Homodimer.

It carries out the reaction (6R)-5,10-methylene-5,6,7,8-tetrahydrofolate + NADP(+) = (6R)-5,10-methenyltetrahydrofolate + NADPH. The enzyme catalyses (6R)-5,10-methenyltetrahydrofolate + H2O = (6R)-10-formyltetrahydrofolate + H(+). It functions in the pathway one-carbon metabolism; tetrahydrofolate interconversion. Functionally, catalyzes the oxidation of 5,10-methylenetetrahydrofolate to 5,10-methenyltetrahydrofolate and then the hydrolysis of 5,10-methenyltetrahydrofolate to 10-formyltetrahydrofolate. The chain is Bifunctional protein FolD from Clostridium perfringens (strain ATCC 13124 / DSM 756 / JCM 1290 / NCIMB 6125 / NCTC 8237 / Type A).